The primary structure comprises 497 residues: Acetyltransferase adrJ (497 aa).

Residues H174 and D422 each act as proton acceptor in the active site. The disordered stretch occupies residues 430 to 451 (SSAQSSSQNTQKKGKPSYVNGV).

Belongs to the plant acyltransferase family. Monomer.

Its pathway is secondary metabolite biosynthesis; terpenoid biosynthesis. Functionally, acetyltransferase; part of the gene cluster that mediates the biosynthesis of andrastins, meroterpenoid compounds that exhibit inhibitory activity against ras farnesyltransferase, suggesting that they could be promising leads for antitumor agents. The first step of the pathway is the synthesis of 3,5-dimethylorsellinic acid (DMOA) by the polyketide synthase adrD via condensation of one acetyl-CoA starter unit with 3 malonyl-CoA units and 2 methylations. DMAO is then converted to farnesyl-DMAO by the prenyltransferase adrG. The methyltransferase adrK catalyzes the methylation of the carboxyl group of farnesyl-DMAO to farnesyl-DMAO methyl ester which is further converted to epoxyfarnesyl-DMAO methyl ester by the FAD-dependent monooxygenase adrH. The terpene cyclase adrI then catalyzes the carbon skeletal rearrangement to generate the andrastin E, the first compound in the pathway having the andrastin scaffold, with the tetracyclic ring system. The post-cyclization tailoring enzymes adrF, adrE, adrJ, and adrA, are involved in the conversion of andrastin E into andrastin A. The short chain dehydrogenase adrF is responsible for the oxidation of the C-3 a hydroxyl group of andrastin E to yield the corresponding ketone, andrastin D. The ketoreductase adrE stereoselectively reduces the carbonyl moiety to reverse the stereochemistry of the C-3 position to yield andrastin F. The acetyltransferase adrJ is the acetyltransferase that attaches the acetyl group to the C-3 hydroxyl group of andrastin F to yield andrastin C. Finally, the cytochrome P450 monooxygenase adrA catalyzes two sequential oxidation reactions of the C-23 methyl group, to generate the corresponding alcohol andrastin B, and aldehyde andrastin A. This is Acetyltransferase adrJ from Penicillium rubens (strain ATCC 28089 / DSM 1075 / NRRL 1951 / Wisconsin 54-1255) (Penicillium chrysogenum).